A 928-amino-acid polypeptide reads, in one-letter code: Dual serine/threonine and tyrosine protein kinase (928 aa).

The segment covering 1 to 14 (MEGDGVPWGSEPES) has biased composition (low complexity). Disordered stretches follow at residues 1–22 (MEGD…GGGG) and 55–81 (LRGS…AGDV). The stretch at 394–430 (RKKENELYESLMNIANRKQEEMKDMIVETLNTMKEEL) forms a coiled coil. The 255-residue stretch at 651–905 (PKLGQELGRG…PLLGIVQPML (255 aa)) folds into the Protein kinase domain. Residues 657-665 (LGRGQYGVV) and lysine 680 each bind ATP. The Proton acceptor role is filled by aspartate 776.

This sequence belongs to the protein kinase superfamily. Ser/Thr protein kinase family.

Its subcellular location is the cytoplasm. It localises to the cell membrane. The protein resides in the apical cell membrane. It is found in the basolateral cell membrane. The protein localises to the cell junction. It carries out the reaction L-seryl-[protein] + ATP = O-phospho-L-seryl-[protein] + ADP + H(+). The enzyme catalyses L-threonyl-[protein] + ATP = O-phospho-L-threonyl-[protein] + ADP + H(+). It catalyses the reaction L-tyrosyl-[protein] + ATP = O-phospho-L-tyrosyl-[protein] + ADP + H(+). Functionally, acts as a positive regulator of ERK phosphorylation downstream of fibroblast growth factor-receptor activation. Involved in the regulation of both caspase-dependent apoptosis and caspase-independent cell death. In the skin, it plays a predominant role in suppressing caspase-dependent apoptosis in response to UV stress in a range of dermal cell types. This chain is Dual serine/threonine and tyrosine protein kinase (DSTYK), found in Bos taurus (Bovine).